Consider the following 395-residue polypeptide: 8-amino-3,8-dideoxy-alpha-D-manno-octulosonate transaminase (395 aa).

Lysine 186 carries the post-translational modification N6-(pyridoxal phosphate)lysine.

It belongs to the DegT/DnrJ/EryC1 family. Pyridoxal 5'-phosphate serves as cofactor.

It catalyses the reaction 8-amino-3,8-dideoxy-alpha-D-manno-octulosonate + 2-oxoglutarate = 3,8-dideoxy-8-oxo-alpha-D-manno-octulosonate + L-glutamate. The protein operates within bacterial outer membrane biogenesis; lipopolysaccharide biosynthesis. Catalyzes the second (last) step of the biosynthesis of Kdo8N (8-amino-3,8-dideoxy-D-manno-octulosonate) from Kdo (3-deoxy-D-manno-octulosonate). The polypeptide is 8-amino-3,8-dideoxy-alpha-D-manno-octulosonate transaminase (Shewanella oneidensis (strain ATCC 700550 / JCM 31522 / CIP 106686 / LMG 19005 / NCIMB 14063 / MR-1)).